We begin with the raw amino-acid sequence, 224 residues long: Small ribosomal subunit protein uS3 (224 aa).

Residues 38–106 enclose the KH type-2 domain; sequence IRKFISKKLK…QVHINIVEIK (69 aa).

This sequence belongs to the universal ribosomal protein uS3 family. As to quaternary structure, part of the 30S ribosomal subunit. Forms a tight complex with proteins S10 and S14.

Functionally, binds the lower part of the 30S subunit head. Binds mRNA in the 70S ribosome, positioning it for translation. The sequence is that of Small ribosomal subunit protein uS3 from Lactobacillus helveticus (strain DPC 4571).